We begin with the raw amino-acid sequence, 194 residues long: 22 kDa relaxation protein (194 aa).

This protein is probably required for relaxation complex formation. The sequence is that of 22 kDa relaxation protein from Salmonella typhimurium.